A 622-amino-acid chain; its full sequence is Chaperone protein HtpG (622 aa).

Positions 1 to 334 (MKGQETRGFQ…SNDLPLNVSR (334 aa)) are a; substrate-binding. The b stretch occupies residues 335 to 550 (EILQDSRITQ…ADEMSTQMAK (216 aa)). The tract at residues 551-622 (LFAAAGQQAP…IRRMNQLLTA (72 aa)) is c.

It belongs to the heat shock protein 90 family. In terms of assembly, homodimer.

The protein localises to the cytoplasm. Its function is as follows. Molecular chaperone. Has ATPase activity. In Yersinia pestis, this protein is Chaperone protein HtpG.